We begin with the raw amino-acid sequence, 347 residues long: MVRISLDVMGGDYGPEVVIPGAARALERHPDIKFVLFGQEARCIELLAKHPKLKASSTFHDCEIAVGMDEKPSQALRRGRGKSSMWKAIDAINADEADVVVSAGNTGALMAMSVFCLRTMQGIQRPAIAAIWPTLKGESIVLDVGATIGADAQQLMDFALMGGAMARALFEVERPSVGLLNVGVEEIKGQEEVKEAGRLIREADVEGIEYYGFVEGDDIGRGTVDVVVTEGFSGNIALKAAEGTARQIAEYLRAAMSRTLLARVGYVFAKGAFDRLREKMDPRKVNGGVFLGLNGIVIKSHGGADAEGFAAAIDVGYDMVKNGLKAKIEADLARYHGAQPSEAVPRA.

The protein belongs to the PlsX family. In terms of assembly, homodimer. Probably interacts with PlsY.

Its subcellular location is the cytoplasm. The catalysed reaction is a fatty acyl-[ACP] + phosphate = an acyl phosphate + holo-[ACP]. The protein operates within lipid metabolism; phospholipid metabolism. Its function is as follows. Catalyzes the reversible formation of acyl-phosphate (acyl-PO(4)) from acyl-[acyl-carrier-protein] (acyl-ACP). This enzyme utilizes acyl-ACP as fatty acyl donor, but not acyl-CoA. This is Phosphate acyltransferase from Rhizobium meliloti (strain 1021) (Ensifer meliloti).